The primary structure comprises 460 residues: Chromosomal replication initiator protein DnaA (460 aa).

Residues 1–73 form a domain I, interacts with DnaA modulators region; the sequence is MEISIDSLWS…ANVVQSILGH (73 aa). The tract at residues 73-116 is domain II; that stretch reads HPVEIYITVAKGEEFEEIGGGGAWELPTTNSIYETPNQNRQPNT. A domain III, AAA+ region region spans residues 117–333; it reads ELNAKYVFSR…GALTRALAYI (217 aa). The ATP site is built by Gly-161, Gly-163, Lys-164, and Thr-165. Residues 334–460 form a domain IV, binds dsDNA region; it reads SIWGLPMTVA…MNSRSRKPSL (127 aa).

It belongs to the DnaA family. In terms of assembly, oligomerizes as a right-handed, spiral filament on DNA at oriC.

It localises to the cytoplasm. Functionally, plays an essential role in the initiation and regulation of chromosomal replication. ATP-DnaA binds to the origin of replication (oriC) to initiate formation of the DNA replication initiation complex once per cell cycle. Binds the DnaA box (a 9 base pair repeat at the origin) and separates the double-stranded (ds)DNA. Forms a right-handed helical filament on oriC DNA; dsDNA binds to the exterior of the filament while single-stranded (ss)DNA is stabiized in the filament's interior. The ATP-DnaA-oriC complex binds and stabilizes one strand of the AT-rich DNA unwinding element (DUE), permitting loading of DNA polymerase. After initiation quickly degrades to an ADP-DnaA complex that is not apt for DNA replication. Binds acidic phospholipids. The chain is Chromosomal replication initiator protein DnaA from Trichormus variabilis (strain ATCC 29413 / PCC 7937) (Anabaena variabilis).